The primary structure comprises 118 residues: NADH-quinone oxidoreductase subunit A 2 (118 aa).

The next 3 membrane-spanning stretches (helical) occupy residues 5 to 25 (YLPI…SVIF), 62 to 82 (LIAM…PWAV), and 87 to 107 (LGMF…VGYV).

This sequence belongs to the complex I subunit 3 family. NDH-1 is composed of 14 different subunits. Subunits NuoA, H, J, K, L, M, N constitute the membrane sector of the complex.

Its subcellular location is the cell inner membrane. It carries out the reaction a quinone + NADH + 5 H(+)(in) = a quinol + NAD(+) + 4 H(+)(out). In terms of biological role, NDH-1 shuttles electrons from NADH, via FMN and iron-sulfur (Fe-S) centers, to quinones in the respiratory chain. The immediate electron acceptor for the enzyme in this species is believed to be ubiquinone. Couples the redox reaction to proton translocation (for every two electrons transferred, four hydrogen ions are translocated across the cytoplasmic membrane), and thus conserves the redox energy in a proton gradient. The protein is NADH-quinone oxidoreductase subunit A 2 of Citrifermentans bemidjiense (strain ATCC BAA-1014 / DSM 16622 / JCM 12645 / Bem) (Geobacter bemidjiensis).